Here is a 213-residue protein sequence, read N- to C-terminus: Small ribosomal subunit protein uS5 (213 aa).

An S5 DRBM domain is found at 54 to 117; it reads LKSETVDVRL…RNAKLNIIPV (64 aa).

Belongs to the universal ribosomal protein uS5 family. Part of the 30S ribosomal subunit. Contacts protein S4.

Functionally, with S4 and S12 plays an important role in translational accuracy. The polypeptide is Small ribosomal subunit protein uS5 (Hyperthermus butylicus (strain DSM 5456 / JCM 9403 / PLM1-5)).